The sequence spans 927 residues: Lysine-specific demethylase JMJ28 (927 aa).

Positions 7-52 constitute a WRC domain; sequence VPDEFRCNRSDGKQWRCKRRALEGKKMCESHHSQQSLKRSKQKVAE. The Nuclear localization signal 1 motif lies at 30–37; the sequence is GKKMCESH. Residues 30 to 92 are disordered; sequence GKKMCESHHS…RLGKSKRKRV (63 aa). Over residues 80 to 91 the composition is skewed to basic residues; it reads RSKRLGKSKRKR. The Nuclear localization signal 2 signature appears at 127–134; that stretch reads EKRKRLPN. Residues cysteine 227, cysteine 230, cysteine 241, cysteine 244, cysteine 250, cysteine 253, cysteine 269, and cysteine 272 each coordinate Zn(2+). Residues 227-273 form an RING-type; degenerate zinc finger; the sequence is CHWCGTRGFGDLISCLSCEREFFCIDCIEKRNKGSKEEVEKKCPVCR. Residues 330 to 339 are compositionally biased toward basic and acidic residues; it reads ENDAEKKEGN. 2 disordered regions span residues 330–359 and 701–736; these read ENDAEKKEGNPAEPQIHSSELTSDDRQPCS and RSKNPAKGRESRFDKGKKRDRLDDYSSSDSESSQHC. The 281-residue stretch at 601–881 folds into the JmjC domain; that stretch reads FPNHYAEILN…ESIKRVKELN (281 aa).

The protein belongs to the JARID1 histone demethylase family. In terms of assembly, interacts with the FBH transcription factors FBH1, FBH2, FBH3 and FBH4. Fe(2+) serves as cofactor. Expressed in inflorescences, flowers, roots, siliques, leaves and stems, especially in the vasculature (mainly phloem), with highest levels in floral organs. Present at high levels in flowers, shoot apex and young seeds, but observed at low levels in dry seeds, root apex and anthers.

It is found in the nucleus. Its function is as follows. May function as histone H3 lysine demethylase and be involved in regulation of gene expression. Regulates flowering time by promoting CONSTANS (CO) and CONSTANS-LIKE genes (e.g. COL2 and COL5) expression via interaction with FBH transcription factors (FBH1, FBH2, FBH3 and FBH4) at their loci to remove H3K9me2 repressive histone marks. Also modulates the expression of several developmental genes such as MYB30, TFS1, AGL6 and RVE2. In Arabidopsis thaliana (Mouse-ear cress), this protein is Lysine-specific demethylase JMJ28.